The primary structure comprises 578 residues: CTP synthase 2 (578 aa).

The region spanning 305 to 564 (KIALVGKYTN…VAAASGTLGD (260 aa)) is the Glutamine amidotransferase type-1 domain. Active-site for GATase activity residues include Cys-404, His-537, and Glu-539.

This sequence belongs to the CTP synthase family. Homodimer. Oligomerizes to a tetramer in the presence of its substrates UTP and ATP. Mg(2+) is required as a cofactor.

Its subcellular location is the cytoplasm. It catalyses the reaction UTP + L-glutamine + ATP + H2O = CTP + L-glutamate + ADP + phosphate + 2 H(+). Its pathway is pyrimidine metabolism; CTP biosynthesis via de novo pathway; CTP from UDP: step 2/2. With respect to regulation, activated by GTP. Subject to allosteric product inhibition by CTP. Inhibited by p-chloromercuriphenylsulfonic acid, N-ethylmaleimide and cyclopentenylcytosine (CPEC). Its function is as follows. Catalyzes the ATP-dependent amination of UTP to CTP with either L-glutamine or ammonia as the source of nitrogen. Plays an important role in the regulation of phospholipid synthesis. This Saccharomyces cerevisiae (strain YJM789) (Baker's yeast) protein is CTP synthase 2 (URA8).